The chain runs to 341 residues: Inactive caspase-12 (341 aa).

The CARD domain occupies 1 to 92; the sequence is MADEKPSNGV…QLSSDISSDG (92 aa). Phosphoserine occurs at positions 85 and 90. Residues His172 and Cys220 contribute to the active site.

This sequence belongs to the peptidase C14A family. As to expression, widely expressed, with highest levels in lung.

Its function is as follows. May function as a negative regulator of inflammatory responses and innate immunity. May reduce cytokine release in response to bacterial lipopolysaccharide during infection. Reduces activation of NF-kappa-B in response to TNF. May lack protease activity. This chain is Inactive caspase-12 (CASP12), found in Homo sapiens (Human).